We begin with the raw amino-acid sequence, 125 residues long: Holo-[acyl-carrier-protein] synthase (125 aa).

Residues D8 and E57 each coordinate Mg(2+).

Belongs to the P-Pant transferase superfamily. AcpS family. Mg(2+) serves as cofactor.

It localises to the cytoplasm. It catalyses the reaction apo-[ACP] + CoA = holo-[ACP] + adenosine 3',5'-bisphosphate + H(+). Functionally, transfers the 4'-phosphopantetheine moiety from coenzyme A to a Ser of acyl-carrier-protein. The chain is Holo-[acyl-carrier-protein] synthase from Geotalea daltonii (strain DSM 22248 / JCM 15807 / FRC-32) (Geobacter daltonii).